A 199-amino-acid polypeptide reads, in one-letter code: Tropomyosin-1 (199 aa).

The stretch at 1–199 forms a coiled coil; it reads MDKIREKLSN…DEIAASLENL (199 aa). Residues K39 and K59 each participate in a glycyl lysine isopeptide (Lys-Gly) (interchain with G-Cter in ubiquitin) cross-link. Disordered regions lie at residues 59–81 and 102–147; these read KLEA…ENQI and LAES…TEKL. 2 stretches are compositionally biased toward basic and acidic residues: residues 68-80 and 102-114; these read KQTE…KENQ and LAES…DSHH. Positions 115–126 are enriched in polar residues; that stretch reads LQSNNDNFSKKN. Over residues 136–147 the composition is skewed to basic and acidic residues; it reads SDTKLKETTEKL. Residue K187 forms a Glycyl lysine isopeptide (Lys-Gly) (interchain with G-Cter in ubiquitin) linkage. S195 is subject to Phosphoserine.

As to quaternary structure, homodimer.

It is found in the cytoplasm. The protein resides in the cytoskeleton. The sequence is that of Tropomyosin-1 (TPM1) from Saccharomyces cerevisiae (strain ATCC 204508 / S288c) (Baker's yeast).